A 198-amino-acid polypeptide reads, in one-letter code: Recombination protein RecR (198 aa).

Residues 57–72 (CSVCGHITDQDPCYIC) form a C4-type zinc finger. Positions 80 to 175 (SVICVVQDPK…KLSRIAHGLP (96 aa)) constitute a Toprim domain.

It belongs to the RecR family.

May play a role in DNA repair. It seems to be involved in an RecBC-independent recombinational process of DNA repair. It may act with RecF and RecO. This chain is Recombination protein RecR, found in Bacillus licheniformis (strain ATCC 14580 / DSM 13 / JCM 2505 / CCUG 7422 / NBRC 12200 / NCIMB 9375 / NCTC 10341 / NRRL NRS-1264 / Gibson 46).